The primary structure comprises 82 residues: Cytochrome c-551 (82 aa).

Residues C12, C15, H16, and M61 each coordinate heme c.

In terms of processing, binds 1 heme c group covalently per subunit.

Its function is as follows. This is a prokaryotic monoheme cytochrome, unreactive with mitochondrial cytochrome C oxidase or reductase. It functions in nitrite and nitrate respiration in Pseudomonas, but it is also found in other bacteria. This is Cytochrome c-551 from Ectopseudomonas mendocina (Pseudomonas mendocina).